The chain runs to 538 residues: Bifunctional purine biosynthesis protein PurH (538 aa).

Residues 6 to 158 (KHIPAPDLHR…KNHAYVATVV (153 aa)) enclose the MGS-like domain.

This sequence belongs to the PurH family.

It catalyses the reaction (6R)-10-formyltetrahydrofolate + 5-amino-1-(5-phospho-beta-D-ribosyl)imidazole-4-carboxamide = 5-formamido-1-(5-phospho-D-ribosyl)imidazole-4-carboxamide + (6S)-5,6,7,8-tetrahydrofolate. It carries out the reaction IMP + H2O = 5-formamido-1-(5-phospho-D-ribosyl)imidazole-4-carboxamide. It functions in the pathway purine metabolism; IMP biosynthesis via de novo pathway; 5-formamido-1-(5-phospho-D-ribosyl)imidazole-4-carboxamide from 5-amino-1-(5-phospho-D-ribosyl)imidazole-4-carboxamide (10-formyl THF route): step 1/1. Its pathway is purine metabolism; IMP biosynthesis via de novo pathway; IMP from 5-formamido-1-(5-phospho-D-ribosyl)imidazole-4-carboxamide: step 1/1. The sequence is that of Bifunctional purine biosynthesis protein PurH from Brucella melitensis biotype 2 (strain ATCC 23457).